The chain runs to 667 residues: UvrABC system protein B (667 aa).

The region spanning 31-414 (AGIESGEKEQ…EMDRTKHVVQ (384 aa)) is the Helicase ATP-binding domain. Position 44-51 (44-51 (GATGTGKT)) interacts with ATP. Residues 97 to 120 (YYDYYQPEAYVPSSDTYIEKDSAI) carry the Beta-hairpin motif. One can recognise a Helicase C-terminal domain in the interval 435–597 (QIDDLVGEIN…ITPHTIKKAI (163 aa)). The region spanning 630–665 (LDMISKLEEQMKTAAKKLDFEQAATLRDTVMELKAQ) is the UVR domain.

Belongs to the UvrB family. In terms of assembly, forms a heterotetramer with UvrA during the search for lesions. Interacts with UvrC in an incision complex.

It localises to the cytoplasm. In terms of biological role, the UvrABC repair system catalyzes the recognition and processing of DNA lesions. A damage recognition complex composed of 2 UvrA and 2 UvrB subunits scans DNA for abnormalities. Upon binding of the UvrA(2)B(2) complex to a putative damaged site, the DNA wraps around one UvrB monomer. DNA wrap is dependent on ATP binding by UvrB and probably causes local melting of the DNA helix, facilitating insertion of UvrB beta-hairpin between the DNA strands. Then UvrB probes one DNA strand for the presence of a lesion. If a lesion is found the UvrA subunits dissociate and the UvrB-DNA preincision complex is formed. This complex is subsequently bound by UvrC and the second UvrB is released. If no lesion is found, the DNA wraps around the other UvrB subunit that will check the other stand for damage. The chain is UvrABC system protein B from Lactiplantibacillus plantarum (strain ATCC BAA-793 / NCIMB 8826 / WCFS1) (Lactobacillus plantarum).